A 112-amino-acid chain; its full sequence is uncharacterized protein (112 aa).

A helical membrane pass occupies residues 89-106 (TLYVLVIVGLTILCFLLV).

Belongs to the IIV-6 466R family.

Its subcellular location is the membrane. This is an uncharacterized protein from Aedes vexans (Inland floodwater mosquito).